A 1317-amino-acid chain; its full sequence is Nucleoporin NUP145 (1317 aa).

Over residues 1 to 16 (MFNKSVNSGFTFGNQN) the composition is skewed to polar residues. The tract at residues 1-36 (MFNKSVNSGFTFGNQNTSTPTSTPAQPSSSLQFPQK) is disordered. The FG 1 repeat unit spans residues 12-13 (FG). Over residues 17 to 30 (TSTPTSTPAQPSSS) the composition is skewed to low complexity. The GLFG 1 repeat unit spans residues 39–42 (GLFG). One copy of the FG 2 repeat lies at 79-80 (FG). One copy of the GLFG 2 repeat lies at 89–92 (GLFG). An FG 3 repeat occupies 106–107 (FG). A disordered region spans residues 133 to 165 (QNGGLFGNSNNNNITSTTQNGGLFGKPTTTPAG). GLFG repeat units lie at residues 136 to 139 (GLFG), 154 to 157 (GLFG), 168 to 171 (GLFG), and 181 to 184 (GLFG). The span at 139–164 (GNSNNNNITSTTQNGGLFGKPTTTPA) shows a compositional bias: low complexity. One copy of the GLFG 7; approximate repeat lies at 193–196 (GIFG). The GLFG 8 repeat unit spans residues 206 to 209 (GLFG). Positions 249-278 (TSSLSDVNGKSDAEPKPIENRRTYSFSSSV) are disordered. Basic and acidic residues predominate over residues 257–270 (GKSDAEPKPIENRR). Ser-273 is modified (phosphoserine). The short motif at 369-385 (RKLKIDSNRSAAKKLKL) is the Bipartite nuclear localization signal element. The disordered stretch occupies residues 390-450 (PAITKKHMQD…NLNKQDGENT (61 aa)). The segment at 398–523 (QDEQDSSENE…FGKIVIFRSS (126 aa)) is required for autocatalytic cleavage. Phosphoserine is present on residues Ser-403, Ser-404, and Ser-414. A compositionally biased stretch (basic and acidic residues) spans 418–427 (IDRKENRDNN). Residues 428 to 444 (LDNTYLNGKEQSNNLNK) show a composition bias toward polar residues. The Peptidase S59 domain maps to 458–605 (SFGYWCSPSP…GTWTFKVNHF (148 aa)). A nucleoporin RNA-binding motif (NRM) region spans residues 460-604 (GYWCSPSPEQ…GGTWTFKVNH (145 aa)). A phosphoserine mark is found at Ser-667, Ser-679, and Ser-689. Residue Thr-751 is modified to Phosphothreonine.

This sequence belongs to the nucleoporin GLFG family. As to quaternary structure, component of the nuclear pore complex (NPC). NPC constitutes the exclusive means of nucleocytoplasmic transport. NPCs allow the passive diffusion of ions and small molecules and the active, nuclear transport receptor-mediated bidirectional transport of macromolecules such as proteins, RNAs, ribonucleoparticles (RNPs), and ribosomal subunits across the nuclear envelope. Due to its 8-fold rotational symmetry, all subunits are present with 8 copies or multiples thereof. NUP145C is part of the heptameric 0.5 MDa autoassembling NUP84 NPC subcomplex (NUP84, NUP85, NUP120, NUP133, NUP145C, SEC13 and SEH1). NUP145N may bind homomeric RNA and interacts through its FG repeats with karyopherins. Interacts with MLP1 and MLP2. Post-translationally, NUP145 is autocatalytically cleaved in NUP145N and NUP145C.

The protein resides in the nucleus. It is found in the nuclear pore complex. The protein localises to the nucleus membrane. Functions as a component of the nuclear pore complex (NPC). NPC components, collectively referred to as nucleoporins (NUPs), can play the role of both NPC structural components and of docking or interaction partners for transiently associated nuclear transport factors. Active directional transport is assured by both, a Phe-Gly (FG) repeat affinity gradient for these transport factors across the NPC and a transport cofactor concentration gradient across the nuclear envelope (GSP1 and GSP2 GTPases associated predominantly with GTP in the nucleus, with GDP in the cytoplasm). NUP145 is autocatalytically cleaved in vivo in 2 polypeptides which assume different functions in the NPC. NUP145N as one of the FG repeat nucleoporins participates in karyopherin interactions and contains part of the autocatalytic cleavage activity. NUP145C as part of the NUP84 complex is involved in nuclear poly(A)+ RNA and tRNA export. It is also required for normal NPC distribution (probably through interactions with MLP1 and MLP2) and NPC assembly, as well as for normal nuclear envelope organization. The sequence is that of Nucleoporin NUP145 (NUP145) from Saccharomyces cerevisiae (strain ATCC 204508 / S288c) (Baker's yeast).